A 272-amino-acid polypeptide reads, in one-letter code: Insulin-like growth factor-binding protein 1 (272 aa).

The first 25 residues, 1-25 (MPEFLTVVSWPFLILLSFQVRVVAG), serve as a signal peptide directing secretion. Residues 28–109 (QPWHCAPCTA…TRGQGACVLE (82 aa)) enclose the IGFBP N-terminal domain. 6 cysteine pairs are disulfide-bonded: C32–C59, C35–C61, C43–C62, C50–C65, C73–C86, and C80–C106. The segment at 115-143 (TSSLSGSQHEEAKAAVASEDELAESPEMT) is disordered. Over residues 132–143 (SEDELAESPEMT) the composition is skewed to acidic residues. 3 positions are modified to phosphoserine: S139, S157, and S169. Residue T170 is modified to Phosphothreonine. Y171 carries the phosphotyrosine modification. Positions 186–264 (KEPCQRELYK…SLETRGDPNC (79 aa)) constitute a Thyroglobulin type-1 domain. 3 disulfide bridges follow: C189/C219, C230/C241, and C243/C264. S255 is modified (phosphoserine). Positions 259-261 (RGD) match the Cell attachment site motif.

In terms of assembly, binds equally well IGF1 and IGF2. Interacts with integrin ITGA5:ITGB1. Interacts with VHL; this interaction inhibits HIF1A degradation.

It localises to the secreted. In terms of biological role, multifunctional protein that plays a critical role in regulating the availability of IGFs such as IGF1 and IGF2 to their receptors and thereby regulates IGF-mediated cellular processes including cell migration, proliferation, differentiation or apoptosis in a cell-type specific manner. Also plays a positive role in cell migration by interacting with integrin ITGA5:ITGB1 through its RGD motif. Mechanistically, binding to integrins leads to activation of focal adhesion kinase/PTK2 and stimulation of the mitogen-activated protein kinase (MAPK) pathway. Regulates cardiomyocyte apoptosis by suppressing HIF-1alpha/HIF1A ubiquitination and subsequent degradation. The sequence is that of Insulin-like growth factor-binding protein 1 (Igfbp1) from Rattus norvegicus (Rat).